The primary structure comprises 400 residues: Cytohesin-3 (400 aa).

Residues 14-61 adopt a coiled-coil conformation; that stretch reads EDLSLEEREELLDIRRRKKELIDDIERLKYEIAEVMTEIDNLTSVEES. One can recognise an SEC7 domain in the interval 77 to 206; the sequence is FNMDPKKGIQ…IIMLNTSLHN (130 aa). Residues 264–381 form the PH domain; it reads NPDREGWLLK…WMKSIKASIS (118 aa). A 1,2-diacyl-sn-glycero-3-phospho-(1D-myo-inositol-3,4,5-trisphosphate) contacts are provided by residues 273–281, R285, Y296, R306, and N355; that span reads KLGGGRVKT. The segment at 392-400 is C-terminal autoinhibitory region; the sequence is RKRRIANKK.

In terms of assembly, interacts with TAMALIN. Interacts with ARF6. Interacts with FRMD4A. Interacts with FRMD4B. Almost absent from liver, thymus and peripheral blood lymphocytes.

Its subcellular location is the cytoplasm. The protein resides in the cytosol. The protein localises to the cell membrane. It is found in the cell junction. It localises to the adherens junction. Its subcellular location is the tight junction. Promotes guanine-nucleotide exchange on ARF1 and ARF6. Promotes the activation of ARF factors through replacement of GDP with GTP. Plays a role in the epithelial polarization. The polypeptide is Cytohesin-3 (Homo sapiens (Human)).